A 237-amino-acid polypeptide reads, in one-letter code: Sugar fermentation stimulation protein homolog (237 aa).

The protein belongs to the SfsA family.

This Pseudomonas putida (strain ATCC 700007 / DSM 6899 / JCM 31910 / BCRC 17059 / LMG 24140 / F1) protein is Sugar fermentation stimulation protein homolog.